The primary structure comprises 273 residues: Dermonecrotic toxin SdSicTox-betaIF1 (273 aa).

Residue His-5 is part of the active site. 2 residues coordinate Mg(2+): Glu-25 and Asp-27. His-41 acts as the Nucleophile in catalysis. Disulfide bonds link Cys-45–Cys-51 and Cys-47–Cys-189.

This sequence belongs to the arthropod phospholipase D family. Class II subfamily. Requires Mg(2+) as cofactor. As to expression, expressed by the venom gland.

It is found in the secreted. The catalysed reaction is an N-(acyl)-sphingosylphosphocholine = an N-(acyl)-sphingosyl-1,3-cyclic phosphate + choline. It carries out the reaction an N-(acyl)-sphingosylphosphoethanolamine = an N-(acyl)-sphingosyl-1,3-cyclic phosphate + ethanolamine. The enzyme catalyses a 1-acyl-sn-glycero-3-phosphocholine = a 1-acyl-sn-glycero-2,3-cyclic phosphate + choline. It catalyses the reaction a 1-acyl-sn-glycero-3-phosphoethanolamine = a 1-acyl-sn-glycero-2,3-cyclic phosphate + ethanolamine. In terms of biological role, dermonecrotic toxins cleave the phosphodiester linkage between the phosphate and headgroup of certain phospholipids (sphingolipid and lysolipid substrates), forming an alcohol (often choline) and a cyclic phosphate. This toxin acts on sphingomyelin (SM). It may also act on ceramide phosphoethanolamine (CPE), lysophosphatidylcholine (LPC) and lysophosphatidylethanolamine (LPE), but not on lysophosphatidylserine (LPS), and lysophosphatidylglycerol (LPG). It acts by transphosphatidylation, releasing exclusively cyclic phosphate products as second products. Induces dermonecrosis, hemolysis, increased vascular permeability, edema, inflammatory response, and platelet aggregation. The polypeptide is Dermonecrotic toxin SdSicTox-betaIF1 (Sicarius cf. damarensis (strain GJB-2008) (Six-eyed sand spider)).